The following is a 39-amino-acid chain: KSAVTRNYSEKKNERLWFKKNYDHAGNQRRIQKWNTQLK.

The protein belongs to the CSN2 family. In terms of assembly, component of the CSN complex, probably composed of CSN1, CSN2, CSN3, CSN4, CSN5 (CSN5A or CSN5B), CSN6 (CSN6A or CSN6B), CSN7 and CSN8.

Its subcellular location is the cytoplasm. The protein resides in the nucleus. Its function is as follows. Component of the COP9 signalosome complex (CSN), a complex involved in various cellular and developmental processes such as photomorphogenesis and auxin and jasmonate responses. The CSN complex is an essential regulator of the ubiquitin (Ubl) conjugation pathway by mediating the deneddylation of the cullin subunits of SCF-type E3 ligase complexes, leading to decrease the Ubl ligase activity of SCF. It is involved in repression of photomorphogenesis in darkness by regulating the activity of COP1-containing Ubl ligase complexes. In Brassica oleracea (Wild cabbage), this protein is COP9 signalosome complex subunit 2 (CSN2).